The sequence spans 466 residues: Glutamate decarboxylase (466 aa).

K277 carries the post-translational modification N6-(pyridoxal phosphate)lysine.

Belongs to the group II decarboxylase family. The cofactor is pyridoxal 5'-phosphate.

It catalyses the reaction L-glutamate + H(+) = 4-aminobutanoate + CO2. Its function is as follows. Converts internalized glutamate to GABA and increases the internal pH. Involved in glutamate-dependent acid resistance. In Lactococcus lactis subsp. lactis (strain IL1403) (Streptococcus lactis), this protein is Glutamate decarboxylase (gadB).